We begin with the raw amino-acid sequence, 159 residues long: Transcriptional repressor NrdR (159 aa).

A zinc finger spans residues 3-34 (CPFCEYNGTRVLDSRPFNHNKSIRRRRECEAC). Positions 49 to 139 (LLIVKKDGTR…VYRQFKDINV (91 aa)) constitute an ATP-cone domain.

Belongs to the NrdR family. Requires Zn(2+) as cofactor.

Functionally, negatively regulates transcription of bacterial ribonucleotide reductase nrd genes and operons by binding to NrdR-boxes. The chain is Transcriptional repressor NrdR from Brevibacillus brevis (strain 47 / JCM 6285 / NBRC 100599).